The sequence spans 459 residues: Glycosyl hydrolase family 109 protein 1 (459 aa).

A signal peptide (tat-type signal) is located at residues 1 to 31; it reads MHNIHRRHFLKAAGAVTAGLVTANIALNANA. Residues 64 to 65, Asp86, 135 to 138, 155 to 156, and Asn184 contribute to the NAD(+) site; these read ER, WEWH, and EV. Substrate-binding positions include Tyr213, Arg232, 244-247, and Tyr326; that span reads YPTH. NAD(+) is bound at residue Tyr244.

It belongs to the Gfo/Idh/MocA family. Glycosyl hydrolase 109 subfamily. It depends on NAD(+) as a cofactor. Post-translationally, predicted to be exported by the Tat system. The position of the signal peptide cleavage has not been experimentally proven.

Its function is as follows. Glycosidase. This is Glycosyl hydrolase family 109 protein 1 from Shewanella sp. (strain MR-4).